The sequence spans 104 residues: Vesicle-associated membrane protein 3 (104 aa).

Positions 1-23 are disordered; sequence MTTNAPAGSSAAAGSSRRLQQTQ. The Cytoplasmic portion of the chain corresponds to 1 to 81; that stretch reads MTTNAPAGSS…KRKYWWKNCK (81 aa). Residues 7–16 show a composition bias toward low complexity; the sequence is AGSSAAAGSS. The v-SNARE coiled-coil homology domain maps to 18–78; that stretch reads RLQQTQNQVD…AKLKRKYWWK (61 aa). Glycyl lysine isopeptide (Lys-Gly) (interchain with G-Cter in ubiquitin) cross-links involve residues Lys70, Lys72, and Lys81. The chain crosses the membrane as a helical; Anchor for type IV membrane protein span at residues 82-102; sequence MWAIGITVVVIIIIIIVVWSI. Over 103-104 the chain is Vesicular; that stretch reads SS.

Belongs to the synaptobrevin family. As to quaternary structure, interacts with POPDC1 (via the C-terminus cytoplasmic tail). Interacts with BCAP31; involved in VAMP3 export from the endoplasmic reticulum. Interacts with BAIAP3; this interaction is increased in the presence of calcium. Interacts with PICALM. Ubiquitinated by RNF167 at Lys-70, Lys-72 and Lys-81, regulating the recycling endosome pathway.

Its subcellular location is the early endosome membrane. The protein localises to the recycling endosome membrane. The protein resides in the synapse. It localises to the synaptosome. SNARE involved in vesicular transport from the late endosomes to the trans-Golgi network. The chain is Vesicle-associated membrane protein 3 (VAMP3) from Bos taurus (Bovine).